Reading from the N-terminus, the 400-residue chain is Peroxisome biogenesis factor 16 (400 aa).

Residues 176–226 form a disordered region; sequence QKQFQNKRPAVTMSINNNNNINNNDNNNINNNNNTNDDNFNNNNNNNNNRR. Residues 190 to 224 show a composition bias toward low complexity; it reads INNNNNINNNDNNNINNNNNTNDDNFNNNNNNNNN.

The protein belongs to the peroxin-16 family.

It localises to the cytoplasm. Required for peroxisome membrane biogenesis. This is Peroxisome biogenesis factor 16 (pex16) from Dictyostelium discoideum (Social amoeba).